The primary structure comprises 630 residues: tRNA uridine 5-carboxymethylaminomethyl modification enzyme MnmG (630 aa).

Residue 13–18 participates in FAD binding; sequence GGGHAG. 273–287 lines the NAD(+) pocket; that stretch reads GPRYCPSIEDKIHRF.

The protein belongs to the MnmG family. In terms of assembly, homodimer. Heterotetramer of two MnmE and two MnmG subunits. FAD serves as cofactor.

It is found in the cytoplasm. Functionally, NAD-binding protein involved in the addition of a carboxymethylaminomethyl (cmnm) group at the wobble position (U34) of certain tRNAs, forming tRNA-cmnm(5)s(2)U34. This is tRNA uridine 5-carboxymethylaminomethyl modification enzyme MnmG from Pseudomonas putida (strain GB-1).